The primary structure comprises 102 residues: Probable non-specific lipid-transfer protein (102 aa).

The N-terminal stretch at 1 to 35 (MAMAMGMAMRKEAAVAVMMVMVVTLAAGADAGAGA) is a signal peptide. 4 disulfide bridges follow: cysteine 37-cysteine 71, cysteine 45-cysteine 59, cysteine 60-cysteine 95, and cysteine 69-cysteine 102.

Belongs to the plant LTP family. B11E subfamily. In terms of tissue distribution, aleurone.

Potential phospholipid transfer protein. The sequence is that of Probable non-specific lipid-transfer protein (LTP2) from Hordeum vulgare (Barley).